The primary structure comprises 183 residues: ADP-ribosylation factor-like protein 5 (183 aa).

Residues 27-34 (GLNAAGKT), 70-74 (DLGGQ), and 129-132 (NKQD) each bind GTP.

This sequence belongs to the small GTPase superfamily. Arf family.

Its function is as follows. May bind and exchange GTP and GDP. The chain is ADP-ribosylation factor-like protein 5 (arl5) from Dictyostelium discoideum (Social amoeba).